The sequence spans 499 residues: Isoflavone 2'-hydroxylase (499 aa).

Cysteine 436 serves as a coordination point for heme.

The protein belongs to the cytochrome P450 family. The cofactor is heme.

The protein resides in the membrane. It catalyses the reaction a 2'-unsubstituted isoflavone + reduced [NADPH--hemoprotein reductase] + O2 = a 2'-hydroxyisoflavone + oxidized [NADPH--hemoprotein reductase] + H2O + H(+). Its function is as follows. Catalyzes the hydroxylation of isoflavones, daidzein and formononetin, to yield 2'-hydroxyisoflavones, 2'-hydroxydaidzein, and 2'-hydroxyformononetin, respectively. This chain is Isoflavone 2'-hydroxylase (CYP81E1), found in Glycyrrhiza echinata (Licorice).